The sequence spans 249 residues: Flavin-dependent thymidylate synthase (249 aa).

In terms of domain architecture, ThyX spans 8–225 (VKVKLLEYTP…PNLFKYSGPS (218 aa)). FAD contacts are provided by residues Ser-62, 86 to 88 (RHR), and Gln-94. DUMP-binding positions include 83 to 86 (QLVR), 94 to 98 (QQSQR), and Arg-164. Positions 86-96 (RHRIASYSQQS) match the ThyX motif motif. FAD is bound by residues 180–182 (NAR) and Asn-186. Arg-191 serves as a coordination point for dUMP. Arg-191 acts as the Involved in ionization of N3 of dUMP, leading to its activation in catalysis.

This sequence belongs to the thymidylate synthase ThyX family. In terms of assembly, homotetramer. Requires FAD as cofactor.

It carries out the reaction dUMP + (6R)-5,10-methylene-5,6,7,8-tetrahydrofolate + NADPH + H(+) = dTMP + (6S)-5,6,7,8-tetrahydrofolate + NADP(+). It functions in the pathway pyrimidine metabolism; dTTP biosynthesis. In terms of biological role, catalyzes the reductive methylation of 2'-deoxyuridine-5'-monophosphate (dUMP) to 2'-deoxythymidine-5'-monophosphate (dTMP) while utilizing 5,10-methylenetetrahydrofolate (mTHF) as the methyl donor, and NADPH and FADH(2) as the reductant. This Clostridium tetani (strain Massachusetts / E88) protein is Flavin-dependent thymidylate synthase.